The following is a 219-amino-acid chain: ATP phosphoribosyltransferase (219 aa).

It belongs to the ATP phosphoribosyltransferase family. Short subfamily. In terms of assembly, heteromultimer composed of HisG and HisZ subunits.

It is found in the cytoplasm. It catalyses the reaction 1-(5-phospho-beta-D-ribosyl)-ATP + diphosphate = 5-phospho-alpha-D-ribose 1-diphosphate + ATP. Its pathway is amino-acid biosynthesis; L-histidine biosynthesis; L-histidine from 5-phospho-alpha-D-ribose 1-diphosphate: step 1/9. Functionally, catalyzes the condensation of ATP and 5-phosphoribose 1-diphosphate to form N'-(5'-phosphoribosyl)-ATP (PR-ATP). Has a crucial role in the pathway because the rate of histidine biosynthesis seems to be controlled primarily by regulation of HisG enzymatic activity. The chain is ATP phosphoribosyltransferase from Paramagnetospirillum magneticum (strain ATCC 700264 / AMB-1) (Magnetospirillum magneticum).